Consider the following 61-residue polypeptide: Large ribosomal subunit protein eL24 (61 aa).

Residues cysteine 7, cysteine 10, cysteine 33, and cysteine 37 each contribute to the Zn(2+) site. The segment at 7 to 37 adopts a C4-type zinc-finger fold; sequence CTYCGRSIEPGTGLMYVKNDGSVLWFCSSKC.

It belongs to the eukaryotic ribosomal protein eL24 family. Part of the 50S ribosomal subunit. Forms a cluster with proteins L3 and L14. Requires Zn(2+) as cofactor.

In terms of biological role, binds to the 23S rRNA. This chain is Large ribosomal subunit protein eL24, found in Hyperthermus butylicus (strain DSM 5456 / JCM 9403 / PLM1-5).